A 599-amino-acid polypeptide reads, in one-letter code: Adenine deaminase (599 aa).

It belongs to the metallo-dependent hydrolases superfamily. Adenine deaminase family. The cofactor is Mn(2+).

It carries out the reaction adenine + H2O + H(+) = hypoxanthine + NH4(+). The chain is Adenine deaminase from Clostridium botulinum (strain Loch Maree / Type A3).